Here is an 84-residue protein sequence, read N- to C-terminus: ATP synthase subunit c (84 aa).

The next 2 membrane-spanning stretches (helical) occupy residues 9–29 (LGLA…GCGI) and 57–77 (ILGL…NLII).

The protein belongs to the ATPase C chain family. In terms of assembly, F-type ATPases have 2 components, F(1) - the catalytic core - and F(0) - the membrane proton channel. F(1) has five subunits: alpha(3), beta(3), gamma(1), delta(1), epsilon(1). F(0) has three main subunits: a(1), b(2) and c(10-14). The alpha and beta chains form an alternating ring which encloses part of the gamma chain. F(1) is attached to F(0) by a central stalk formed by the gamma and epsilon chains, while a peripheral stalk is formed by the delta and b chains.

It localises to the cell membrane. In terms of biological role, f(1)F(0) ATP synthase produces ATP from ADP in the presence of a proton or sodium gradient. F-type ATPases consist of two structural domains, F(1) containing the extramembraneous catalytic core and F(0) containing the membrane proton channel, linked together by a central stalk and a peripheral stalk. During catalysis, ATP synthesis in the catalytic domain of F(1) is coupled via a rotary mechanism of the central stalk subunits to proton translocation. Key component of the F(0) channel; it plays a direct role in translocation across the membrane. A homomeric c-ring of between 10-14 subunits forms the central stalk rotor element with the F(1) delta and epsilon subunits. The polypeptide is ATP synthase subunit c (Lawsonia intracellularis (strain PHE/MN1-00)).